A 671-amino-acid polypeptide reads, in one-letter code: Preterminal protein (671 aa).

The short motif at 380–389 (RLPVRRRRRR) is the Nuclear localization signal element. Residues 386 to 409 (RRRRVPPPPPPPEEEEEGEALMEE) form a disordered region. The span at 397-409 (PEEEEEGEALMEE) shows a compositional bias: acidic residues. The residue at position 580 (S580) is an O-(5'-phospho-DNA)-serine. The interval 645 to 671 (GADVPLPPLPAGPEPPLPPGARPRHRF) is disordered. Positions 649 to 665 (PLPPLPAGPEPPLPPGA) are enriched in pro residues.

Belongs to the adenoviridae terminal protein family. Heterodimer with the polymerase; this heterodimer binds to bp 9 to 18 of the genome. Interacts with host POU2F1; POU2F1 binds to the auxiliary sequences in the inverted terminal repeats and tethers the pTP-POL heterodimer to the origin DNA thereby participating in the assembly of the pre-initiation complex (POL-TP-DBP-NFIA-POU2F1). Post-translationally, preterminal protein is used to replicate viral genome, upon genomic encapsidation it is processed first into iTP and finally into TP by adenovirus protease.

It is found in the host nucleus matrix. Protein covalently bound to the viral DNA that acts as a primer for viral genomic replication by DNA strand displacement. Assembles on the viral origin of replication in an initiation complex with viral polymerase, DBP, host NFIA and host POU2F1/OCT1. During initiation, the polymerase covalently couples the first dCTP with Ser-580 of pTP. The terminal protein stimulates the template activity over 20 fold compared to protein-free templates. Neo-synthesized viral genomes are linked to two preterminal proteins, one for each 5' end. These new genomes are encapsidated in the nucleus, and during capsid maturation by viral protease, preterminal protein is first cleaved into intermediary (iTP), then into mature TP. May play a role in host nuclear matrix localization of genomic DNA. The chain is Preterminal protein from Homo sapiens (Human).